A 295-amino-acid polypeptide reads, in one-letter code: HTH-type transcriptional regulator TdfR (295 aa).

One can recognise an HTH lysR-type domain in the interval 1 to 58; it reads MEFRQLRYFVAAAEEGNVGAAARRLHISQPPVTRQIHALEQHLGVLLFERSARGVQLT. Residues 18–37 constitute a DNA-binding region (H-T-H motif); it reads VGAAARRLHISQPPVTRQIH.

The protein belongs to the LysR transcriptional regulatory family.

It is found in the cytoplasm. Its function is as follows. Involved in the regulation of 3-chlorocatechol degradation. Transcriptional regulator of tfdB expression. Acts as a repressor in the absence of its effector (either 2-cis-chlorodiene lactone or chloromaleylacetate) but acts as an activator when its effector is present. The sequence is that of HTH-type transcriptional regulator TdfR (tfdR) from Cupriavidus pinatubonensis (strain JMP 134 / LMG 1197) (Cupriavidus necator (strain JMP 134)).